The sequence spans 457 residues: Ribosomal RNA-processing protein 8 (457 aa).

The interval 47–237 is disordered; it reads LEAASLSQQT…KSDSQESRAG (191 aa). Positions 51 to 61 are enriched in polar residues; the sequence is SLSQQTPSLPG. A phosphoserine mark is found at Ser-62, Ser-64, and Ser-105. The span at 129-138 shows a compositional bias: basic and acidic residues; it reads GEEKGKRKCQ. A compositionally biased stretch (polar residues) spans 139-183; sequence EYSSLHLTQPLDSVDQTVHNSRTSTATIDPSKPSPESMSPNSSHT. Phosphoserine is present on residues Ser-172 and Ser-177. Residues 184–203 show a composition bias toward basic residues; the sequence is LSRKQWRNRQKNKRRHKNKF. 6 residues coordinate S-adenosyl-L-methionine: His-282, Gly-317, Asp-335, Asp-347, Met-348, and Cys-364.

This sequence belongs to the methyltransferase superfamily. RRP8 family. In terms of assembly, component of the eNoSC complex, composed of SIRT1, SUV39H1 and RRP8.

The protein localises to the nucleus. The protein resides in the nucleolus. Essential component of the eNoSC (energy-dependent nucleolar silencing) complex, a complex that mediates silencing of rDNA in response to intracellular energy status and acts by recruiting histone-modifying enzymes. The eNoSC complex is able to sense the energy status of cell: upon glucose starvation, elevation of NAD(+)/NADP(+) ratio activates SIRT1, leading to histone H3 deacetylation followed by dimethylation of H3 at 'Lys-9' (H3K9me2) by SUV39H1 and the formation of silent chromatin in the rDNA locus. In the complex, RRP8 binds to H3K9me2 and probably acts as a methyltransferase. Its substrates are however unknown. This Mus musculus (Mouse) protein is Ribosomal RNA-processing protein 8 (Rrp8).